The sequence spans 466 residues: Asparagine--tRNA ligase (466 aa).

Belongs to the class-II aminoacyl-tRNA synthetase family. Homodimer.

The protein localises to the cytoplasm. It catalyses the reaction tRNA(Asn) + L-asparagine + ATP = L-asparaginyl-tRNA(Asn) + AMP + diphosphate + H(+). The chain is Asparagine--tRNA ligase from Serratia proteamaculans (strain 568).